Consider the following 1571-residue polypeptide: Guanine nucleotide-releasing factor 2 (1571 aa).

Disordered stretches follow at residues 28–85 (LPPH…RDTN), 202–271 (INSG…KLAR), and 287–316 (MRTT…PTTE). Residues 55–73 (QLHHHHHQQHHHNHHRLWK) show a composition bias toward basic residues. The segment covering 74-83 (TQRQSWSPRD) has biased composition (polar residues). Residues 230–248 (TPGGSSRVGGAGAGGGGGV) are compositionally biased toward gly residues. Polar residues predominate over residues 287-297 (MRTTNNTLGRS). A compositionally biased stretch (basic residues) spans 298–309 (HSPHSPRTKHGT). Residues Ser496 and Ser523 each carry the phosphoserine modification. 6 disordered regions span residues 513-580 (HNVN…QASP), 614-646 (RSRS…HQHL), 695-719 (GEGV…ESGF), 728-747 (STQT…SSNS), 776-868 (QRHI…SEVA), and 879-898 (LNHH…HSKH). The residue at position 524 (Thr524) is a Phosphothreonine. Residue Ser526 is modified to Phosphoserine. The segment covering 532 to 550 (SPPPKPPLPNRASNPPPLP) has biased composition (pro residues). An SH3-binding motif is present at residues 546–556 (PPPLPPKRRSQ). The segment covering 556–579 (QPSASAGTVGVGCSSSTSTSNQAS) has biased composition (low complexity). Ser615 is modified (phosphoserine). Polar residues predominate over residues 620-631 (ENSQCSFDSALN). Residues 697–707 (GVAAAASGDGE) show a composition bias toward low complexity. Positions 708–718 (TNSNRHSNESG) are enriched in polar residues. 2 stretches are compositionally biased toward low complexity: residues 735–747 (SVQS…SSNS) and 780–824 (SSSS…DLAP). Positions 820-831 (ADLAPALPPKSI) match the SH3-binding motif. A compositionally biased stretch (polar residues) spans 851 to 866 (VQSSSGWASHRSSQSE). Short sequence motifs (SH3-binding) lie at residues 924 to 935 (DQEPPPLPIKKK) and 986 to 997 (LEMPPALPPKNY). Residues 1013–1038 (PVIVTTPPPSPKPTLGENGSTGRPDS) are disordered. The N-terminal Ras-GEF domain maps to 1170–1292 (DGPEVKGGYI…LRNKFVEKVT (123 aa)). Positions 1339 to 1564 (KSLEIAEQMT…WQISEKIKPR (226 aa)) constitute a Ras-GEF domain.

Ubiquitous.

In terms of biological role, guanine nucleotide-releasing protein that binds to SH3 domain of Crk. Transduces signals from Crk to activate RAS. Also involved in MAPK activation. The protein is Guanine nucleotide-releasing factor 2 (C3G) of Drosophila melanogaster (Fruit fly).